The following is a 465-amino-acid chain: MQQHYQFDAIVIGSGPGGEGAAMGLVKQGARVAVIERYNNVGGGCTHWGTIPSKALRHAVSRIIEFNQNPLYNNSRTLSATFPDILRHADNVINQQTRMRQGFYERNQCKLFAGDARFIDANTVSVSYMDGTQDTIRADHIVIACGSRPYNPSSVDFNHPRIYNSDSILELNHEPRHVIIYGAGVIGCEYASIFRGLNVKVDLINTRDRLLAFLDQEMSDSLSYHFWNNGVVIRHNEEFEKIEGTDDGVIVHLKSGKKVKADCLLYANGRTGNTDSLGLENVGLESDSRGLLKVNSMYQTALSHIYAVGDVIGYPSLASAAYDQGRIAAQAIASGEASGHLIEDIPTGIYTIPEISSVGKTEQELTAMKVPYEVGRAQFKHLARAQIAGMNVGSLKILFHRDTLQILGIHCFGERAAEIIHIGQAIMEQKGEGNTIEYFVNTTFNYPTMAEAYRVAALNGLNRLF.

Residue 36 to 45 (ERYNNVGGGC) participates in FAD binding.

This sequence belongs to the class-I pyridine nucleotide-disulfide oxidoreductase family. The cofactor is FAD.

The protein localises to the cytoplasm. The catalysed reaction is NAD(+) + NADPH = NADH + NADP(+). Functionally, conversion of NADPH, generated by peripheral catabolic pathways, to NADH, which can enter the respiratory chain for energy generation. In Serratia proteamaculans (strain 568), this protein is Soluble pyridine nucleotide transhydrogenase.